A 389-amino-acid polypeptide reads, in one-letter code: tRNA pseudouridine synthase Pus10 (389 aa).

The Nucleophile role is filled by Asp213. Substrate is bound by residues Tyr278 and Tyr350.

It belongs to the pseudouridine synthase Pus10 family.

The enzyme catalyses uridine(54) in tRNA = pseudouridine(54) in tRNA. The catalysed reaction is uridine(55) in tRNA = pseudouridine(55) in tRNA. In terms of biological role, responsible for synthesis of pseudouridine from uracil-54 and uracil-55 in the psi GC loop of transfer RNAs. The chain is tRNA pseudouridine synthase Pus10 from Thermoplasma acidophilum (strain ATCC 25905 / DSM 1728 / JCM 9062 / NBRC 15155 / AMRC-C165).